A 152-amino-acid polypeptide reads, in one-letter code: Ribosome maturation factor RimP (152 aa).

The protein belongs to the RimP family.

Its subcellular location is the cytoplasm. Its function is as follows. Required for maturation of 30S ribosomal subunits. This Serratia proteamaculans (strain 568) protein is Ribosome maturation factor RimP.